The following is a 188-amino-acid chain: Elongation factor P (188 aa).

This sequence belongs to the elongation factor P family.

It is found in the cytoplasm. The protein operates within protein biosynthesis; polypeptide chain elongation. In terms of biological role, involved in peptide bond synthesis. Stimulates efficient translation and peptide-bond synthesis on native or reconstituted 70S ribosomes in vitro. Probably functions indirectly by altering the affinity of the ribosome for aminoacyl-tRNA, thus increasing their reactivity as acceptors for peptidyl transferase. This is Elongation factor P from Saccharopolyspora erythraea (strain ATCC 11635 / DSM 40517 / JCM 4748 / NBRC 13426 / NCIMB 8594 / NRRL 2338).